Consider the following 82-residue polypeptide: MNPLICAASVVGAGLAIGLGAIGPGIGQGTAAGQAVEGIARQPEAEGKIRGTLLLSLAFMEALTIYGLVVALALMFANPFVS.

Transmembrane regions (helical) follow at residues 3–23 and 57–77; these read PLIC…GAIG and LAFM…LMFA.

Belongs to the ATPase C chain family. F-type ATPases have 2 components, F(1) - the catalytic core - and F(0) - the membrane proton channel. F(1) has five subunits: alpha(3), beta(3), gamma(1), delta(1), epsilon(1). F(0) has four main subunits: a(1), b(1), b'(1) and c(10-14). The alpha and beta chains form an alternating ring which encloses part of the gamma chain. F(1) is attached to F(0) by a central stalk formed by the gamma and epsilon chains, while a peripheral stalk is formed by the delta, b and b' chains.

The protein resides in the plastid. It localises to the chloroplast thylakoid membrane. In terms of biological role, f(1)F(0) ATP synthase produces ATP from ADP in the presence of a proton or sodium gradient. F-type ATPases consist of two structural domains, F(1) containing the extramembraneous catalytic core and F(0) containing the membrane proton channel, linked together by a central stalk and a peripheral stalk. During catalysis, ATP synthesis in the catalytic domain of F(1) is coupled via a rotary mechanism of the central stalk subunits to proton translocation. Key component of the F(0) channel; it plays a direct role in translocation across the membrane. A homomeric c-ring of between 10-14 subunits forms the central stalk rotor element with the F(1) delta and epsilon subunits. The chain is ATP synthase subunit c, chloroplastic from Ostreococcus tauri.